The primary structure comprises 433 residues: Glutamate-1-semialdehyde 2,1-aminomutase (433 aa).

At Lys-269 the chain carries N6-(pyridoxal phosphate)lysine.

It belongs to the class-III pyridoxal-phosphate-dependent aminotransferase family. HemL subfamily. In terms of assembly, homodimer. Requires pyridoxal 5'-phosphate as cofactor.

Its subcellular location is the cytoplasm. The enzyme catalyses (S)-4-amino-5-oxopentanoate = 5-aminolevulinate. The protein operates within porphyrin-containing compound metabolism; protoporphyrin-IX biosynthesis; 5-aminolevulinate from L-glutamyl-tRNA(Glu): step 2/2. In Renibacterium salmoninarum (strain ATCC 33209 / DSM 20767 / JCM 11484 / NBRC 15589 / NCIMB 2235), this protein is Glutamate-1-semialdehyde 2,1-aminomutase.